We begin with the raw amino-acid sequence, 85 residues long: High-potential iron-sulfur protein (85 aa).

[4Fe-4S] cluster contacts are provided by Cys-43, Cys-46, Cys-63, and Cys-77.

Belongs to the high-potential iron-sulfur protein (HiPIP) family. Homodimer.

Its subcellular location is the periplasm. Specific class of high-redox-potential 4Fe-4S ferredoxins. Functions in anaerobic electron transport in most purple and in some other photosynthetic bacteria and in at least one genus (Paracoccus) of halophilic, denitrifying bacteria. This Allochromatium warmingii (Chromatium warmingii) protein is High-potential iron-sulfur protein.